Reading from the N-terminus, the 208-residue chain is Holliday junction resolvase RecU (208 aa).

Positions 1–25 are disordered; the sequence is MNYPNGKPFNRNKTKVGRTNDHKSS. Mg(2+) is bound by residues threonine 87, aspartate 89, glutamate 102, and glutamine 121.

This sequence belongs to the RecU family. It depends on Mg(2+) as a cofactor.

The protein resides in the cytoplasm. The catalysed reaction is Endonucleolytic cleavage at a junction such as a reciprocal single-stranded crossover between two homologous DNA duplexes (Holliday junction).. Its function is as follows. Endonuclease that resolves Holliday junction intermediates in genetic recombination. Cleaves mobile four-strand junctions by introducing symmetrical nicks in paired strands. Promotes annealing of linear ssDNA with homologous dsDNA. Required for DNA repair, homologous recombination and chromosome segregation. In Staphylococcus carnosus (strain TM300), this protein is Holliday junction resolvase RecU.